The primary structure comprises 439 residues: Rho GTPase-activating protein 1 (439 aa).

Methionine 1 is subject to N-acetylmethionine. A compositionally biased stretch (basic and acidic residues) spans 28 to 48 (IDEKNWPSDEMPDFPKSDDSK). A disordered region spans residues 28 to 52 (IDEKNWPSDEMPDFPKSDDSKSSSP). Residues serine 44, serine 47, serine 50, and serine 51 each carry the phosphoserine modification. A CRAL-TRIO domain is found at 63–218 (PYYDIARHQI…QVLKYDDFLK (156 aa)). Position 65 is a phosphotyrosine (tyrosine 65). At lysine 80 the chain carries N6-acetyllysine. Residues 228 to 238 (PKPMPPRPPLP) carry the SH3-binding motif. Residues 244–431 (VSLQHLQEKN…FLLDHQGELF (188 aa)) enclose the Rho-GAP domain.

In terms of assembly, found in a complex with XPO7, EIF4A1, ARHGAP1, VPS26A, VPS29, VPS35 and SFN. Interacts with BNIPL. Ubiquitous.

It is found in the cytoplasm. Its function is as follows. GTPase activator for the Rho, Rac and Cdc42 proteins, converting them to the putatively inactive GDP-bound state. Cdc42 seems to be the preferred substrate. This chain is Rho GTPase-activating protein 1 (ARHGAP1), found in Homo sapiens (Human).